The sequence spans 660 residues: Bifunctional polymyxin resistance protein ArnA (660 aa).

The interval 1-304 is formyltransferase ArnAFT; that stretch reads MKTVVFAYHD…TLGLVQGSRL (304 aa). A (6R)-10-formyltetrahydrofolate-binding site is contributed by 86 to 88; that stretch reads HLI. His-104 functions as the Proton donor; for formyltransferase activity in the catalytic mechanism. (6R)-10-formyltetrahydrofolate contacts are provided by residues Arg-114 and 136–140; that span reads VKRAD. A dehydrogenase ArnADH region spans residues 314-660; sequence RRTRVLILGV…RTVDLTDKPS (347 aa). NAD(+) contacts are provided by residues Asp-347 and 368–369; that span reads DI. UDP-alpha-D-glucuronate contacts are provided by residues Ala-393, Tyr-398, and 432–433; that span reads TS. Glu-434 acts as the Proton acceptor; for decarboxylase activity in catalysis. UDP-alpha-D-glucuronate-binding positions include Arg-460, Asn-492, 526–535, and Tyr-613; that span reads KLIDGGKQKR. The active-site Proton donor; for decarboxylase activity is Arg-619.

It in the N-terminal section; belongs to the Fmt family. UDP-L-Ara4N formyltransferase subfamily. The protein in the C-terminal section; belongs to the NAD(P)-dependent epimerase/dehydratase family. UDP-glucuronic acid decarboxylase subfamily. Homohexamer, formed by a dimer of trimers.

The enzyme catalyses UDP-alpha-D-glucuronate + NAD(+) = UDP-beta-L-threo-pentopyranos-4-ulose + CO2 + NADH. It catalyses the reaction UDP-4-amino-4-deoxy-beta-L-arabinose + (6R)-10-formyltetrahydrofolate = UDP-4-deoxy-4-formamido-beta-L-arabinose + (6S)-5,6,7,8-tetrahydrofolate + H(+). Its pathway is nucleotide-sugar biosynthesis; UDP-4-deoxy-4-formamido-beta-L-arabinose biosynthesis; UDP-4-deoxy-4-formamido-beta-L-arabinose from UDP-alpha-D-glucuronate: step 1/3. The protein operates within nucleotide-sugar biosynthesis; UDP-4-deoxy-4-formamido-beta-L-arabinose biosynthesis; UDP-4-deoxy-4-formamido-beta-L-arabinose from UDP-alpha-D-glucuronate: step 3/3. It participates in bacterial outer membrane biogenesis; lipopolysaccharide biosynthesis. In terms of biological role, bifunctional enzyme that catalyzes the oxidative decarboxylation of UDP-glucuronic acid (UDP-GlcUA) to UDP-4-keto-arabinose (UDP-Ara4O) and the addition of a formyl group to UDP-4-amino-4-deoxy-L-arabinose (UDP-L-Ara4N) to form UDP-L-4-formamido-arabinose (UDP-L-Ara4FN). The modified arabinose is attached to lipid A and is required for resistance to polymyxin and cationic antimicrobial peptides. This Escherichia coli O6:H1 (strain CFT073 / ATCC 700928 / UPEC) protein is Bifunctional polymyxin resistance protein ArnA.